We begin with the raw amino-acid sequence, 1024 residues long: NLR family CARD domain-containing protein 4 (1024 aa).

A CARD domain is found at 1–88; sequence MNFIRNNRRA…FVYQDLTGQN (88 aa). Residues 95–298 are nucleotide-binding domain (NBD); sequence EEDLNVLAQN…HVGALTAEVG (204 aa). Residues Thr135, 172-177, and His443 each bind ATP; that span reads GKGKST. Residues 163-476 form the NACHT domain; sequence SPCLIEGESG…VSKGNSYLNK (314 aa). The winged-helix domain (WHD) stretch occupies residues 356–463; that stretch reads AHTQTMLFQT…RLSSLLTSKE (108 aa). Ser533 is subject to Phosphoserine. 12 LRR repeats span residues 578-598, 656-679, 735-758, 762-785, 787-812, 824-847, 848-870, 878-902, 911-933, 936-963, 965-985, and 999-1021; these read FFQG…LFDF, KQEF…DIKY, VTGL…LIDS, LKNL…NLAE, LRSL…DYIV, EMKL…LHNL, IKLS…ALQE, LGEL…LLKQ, KLGL…FLEM, LRDL…VFEN, KQLV…ALVR, and EVKL…TFKL.

In terms of assembly, homooligomer; homooligomerizes following activation of Naip proteins by pathogenic proteins such as S.typhimurium (Salmonella) flagellin or PrgJ. Component of the NLRC4 inflammasome, at least composed of NLRC4, caspase-1 (CASP1) and some NAIP protein (Naip, Naip2 or Naip5). Interacts with Naip5 and Naip6; following Naip5 and Naip6 engagement by Salmonella flagellin. Interacts with Naip2; following Naip2 engagement by Salmonella PrgJ. The inflammasome is a huge complex that contains multiple copies of NLRC4 and a single Naip protein chain. Some NLRC4 inflammasomes contain PYCARD/ASC, while some others directly contact and activate CASP1. Interacts with EIF2AK2/PKR. Post-translationally, phosphorylated at Ser-533 following infection of macrophages with S.typhimurium (Salmonella). Phosphorylation is essential for NLRC4 inflammasome function to promote caspase-1 activation and pyroptosis. PRKCD phosphorylates Ser-533 in vitro. As to expression, expressed by intestinal mononuclear phagocytes.

The protein localises to the cytoplasm. Its subcellular location is the cytosol. The protein resides in the inflammasome. Functionally, key component of inflammasomes that indirectly senses specific proteins from pathogenic bacteria and fungi and responds by assembling an inflammasome complex that promotes caspase-1 activation, cytokine production and macrophage pyroptosis. The NLRC4 inflammasome is activated as part of the innate immune response to a range of intracellular bacteria. It senses pathogenic proteins of the type III secretion system (T3SS) and type IV secretion system (T4SS) such as flagellin and PrgJ-like rod proteins via the Naip proteins (Naip1, Naip2 or Naip5): specific Naip proteins recognize and bind pathogenic proteins, driving assembly and activation of the NLRC4 inflammasome. The NLRC4 inflammasome senses Gram-negative bacteria such as L.pneumophila and P.aeruginosa, enteric pathogens S.typhimurium (Salmonella) and S.flexneri and fungal pathogen C.albicans. In intestine, the NLRC4 inflammasome is able to discriminate between commensal and pathogenic bacteria and specifically drives production of interleukin-1 beta (IL1B) in response to infection by Salmonella or P.aeruginosa. In case of L.pneumophila infection the inflammasome acts by activating caspase-7. The sequence is that of NLR family CARD domain-containing protein 4 (Nlrc4) from Mus musculus (Mouse).